A 416-amino-acid polypeptide reads, in one-letter code: Transcription factor LATE FLOWERING (416 aa).

Low complexity-rich tracts occupy residues Ser176–Pro186 and Thr200–Thr212. Disordered regions lie at residues Ser176 to Ser226 and Leu276 to Ala311. Positions Ile303 to Arg316 are basic motif; degenerate. In terms of domain architecture, bHLH spans Ile303–Leu352. Residues Glu317–Leu352 are helix-loop-helix motif.

It belongs to the bHLH protein family. As to quaternary structure, interacts with PIL13 and PIL15.

It is found in the nucleus. Functionally, transcription factor involved in the negative regulation of flowering. May be involved in the repression of the flowering factor GI and HD1 by interacting with PIL13 and PIL15 and competing with PRR1. Possesses transactivation activity in yeast. In Oryza sativa subsp. japonica (Rice), this protein is Transcription factor LATE FLOWERING.